The following is a 102-amino-acid chain: MTYASSSSSSLSKAANALKPRIGLSATISLVSAGLLEEIFLLFGLTFKVSWAMVATGTVEVGVVSVSSSSSSPLPFFLASNVHQPSESVVTLGLLCLIFGLP.

Residues 27-47 (TISLVSAGLLEEIFLLFGLTF) traverse the membrane as a helical segment.

The protein resides in the membrane. This is an uncharacterized protein from Saccharomyces cerevisiae (strain ATCC 204508 / S288c) (Baker's yeast).